The sequence spans 609 residues: UvrABC system protein C (609 aa).

The 79-residue stretch at 16–94 folds into the GIY-YIG domain; the sequence is SSPGVYRMYD…IKQYMPKYNV (79 aa). Positions 203-238 constitute a UVR domain; the sequence is HQVMSVLVGKMEQAASDMRYEQAALYRDQITALRRV.

This sequence belongs to the UvrC family. As to quaternary structure, interacts with UvrB in an incision complex.

It localises to the cytoplasm. The UvrABC repair system catalyzes the recognition and processing of DNA lesions. UvrC both incises the 5' and 3' sides of the lesion. The N-terminal half is responsible for the 3' incision and the C-terminal half is responsible for the 5' incision. The polypeptide is UvrABC system protein C (Shewanella halifaxensis (strain HAW-EB4)).